Reading from the N-terminus, the 424-residue chain is Zinc metalloproteinase-disintegrin-like brevilysin H2b (424 aa).

Position 1 is a pyrrolidone carboxylic acid (Gln-1). The Peptidase M12B domain occupies 9 to 207; sequence RYVKLAIVAD…YKPQCILNEP (199 aa). Residue Asn-69 is glycosylated (N-linked (GlcNAc...) asparagine). A Ca(2+)-binding site is contributed by Asp-96. 3 cysteine pairs are disulfide-bonded: Cys-120–Cys-202, Cys-164–Cys-186, and Cys-166–Cys-169. His-145 contacts Zn(2+). Glu-146 is an active-site residue. Residues His-149 and His-155 each coordinate Zn(2+). Asn-185 carries an N-linked (GlcNAc...) asparagine glycan. The Ca(2+) site is built by Cys-202, Asn-205, Val-217, Asn-220, Leu-222, Glu-224, Glu-227, and Asp-230. In terms of domain architecture, Disintegrin spans 215 to 301; that stretch reads PPVCGNELLE…DCPTDDLQRN (87 aa). Disulfide bonds link Cys-218-Cys-247, Cys-229-Cys-242, Cys-231-Cys-237, Cys-241-Cys-264, Cys-255-Cys-261, Cys-260-Cys-286, Cys-273-Cys-293, Cys-280-Cys-312, Cys-305-Cys-317, Cys-324-Cys-374, Cys-339-Cys-385, Cys-352-Cys-362, Cys-369-Cys-411, and Cys-405-Cys-417. Positions 279 to 281 match the D/ECD-tripeptide motif; that stretch reads DCD. Residues Asp-281, Glu-284, and Asp-296 each contribute to the Ca(2+) site.

Belongs to the venom metalloproteinase (M12B) family. P-III subfamily. P-IIIa sub-subfamily. In terms of assembly, monomer. The cofactor is Zn(2+). In terms of processing, glycosylated. Expressed by the venom gland.

Its subcellular location is the secreted. Its activity is regulated as follows. Its proteolytic activity is inhibited by EDTA, TPEN, 1,10-phenanthroline, and some thiol compounds, but is enhanced by alkaline earth metal ions (Mg2+, Ca2+, Sr2+, and Ba2+). Its activity is not modulated by urea (4 M). Its function is as follows. Non-hemorrhagic metalloproteinase that degrades fibrinogen. The alpha chain (FGA) is rapidly degraded, the beta chain (FGB) is degraded very slowly, while the gamma chain is left intact. Shows a prefential cleavage at X-Leu bonds. Cleaves insulin B chain at '29-His-|-Leu-30', '33-Ser-|-His-34', '38-Ala-|-Leu-39' and '40-Tyr-|-Leu-41' bonds. This chain is Zinc metalloproteinase-disintegrin-like brevilysin H2b, found in Gloydius brevicauda (Korean slamosa snake).